The sequence spans 480 residues: tRNA (uracil-5-)-methyltransferase homolog B (480 aa).

Positions 299, 349, and 399 each coordinate S-adenosyl-L-methionine. The Nucleophile role is filled by cysteine 427. Residue glutamate 473 is the Proton acceptor of the active site.

The protein belongs to the class I-like SAM-binding methyltransferase superfamily. RNA M5U methyltransferase family.

The protein resides in the mitochondrion. It catalyses the reaction uridine(54) in tRNA + S-adenosyl-L-methionine = 5-methyluridine(54) in tRNA + S-adenosyl-L-homocysteine + H(+). The enzyme catalyses a uridine in 12S rRNA + S-adenosyl-L-methionine = a 5-methyluridine in 12S rRNA + S-adenosyl-L-homocysteine + H(+). In terms of biological role, mitochondrial S-adenosyl-L-methionine-dependent methyltransferase that catalyzes the formation of 5-methyl-uridine in tRNAs and 12S rRNA. Catalyzes the methylation of uridine at position 54 (m5U54) in all tRNAs. Specifically methylates the uridine in position 429 of 12S rRNA (m5U429). Does not affect RNA stability or mitochondrial translation. This chain is tRNA (uracil-5-)-methyltransferase homolog B (trmt2b), found in Danio rerio (Zebrafish).